The chain runs to 260 residues: Pyridoxine 5'-phosphate synthase (260 aa).

3-amino-2-oxopropyl phosphate is bound by residues Asn10 and Arg21. The active-site Proton acceptor is His46. Residues Arg48 and His53 each coordinate 1-deoxy-D-xylulose 5-phosphate. The Proton acceptor role is filled by Glu76. Residue Thr113 coordinates 1-deoxy-D-xylulose 5-phosphate. Catalysis depends on His204, which acts as the Proton donor. 3-amino-2-oxopropyl phosphate-binding positions include Asp205 and 227 to 228 (GH).

This sequence belongs to the PNP synthase family. Homooctamer; tetramer of dimers.

The protein resides in the cytoplasm. The catalysed reaction is 3-amino-2-oxopropyl phosphate + 1-deoxy-D-xylulose 5-phosphate = pyridoxine 5'-phosphate + phosphate + 2 H2O + H(+). It participates in cofactor biosynthesis; pyridoxine 5'-phosphate biosynthesis; pyridoxine 5'-phosphate from D-erythrose 4-phosphate: step 5/5. In terms of biological role, catalyzes the complicated ring closure reaction between the two acyclic compounds 1-deoxy-D-xylulose-5-phosphate (DXP) and 3-amino-2-oxopropyl phosphate (1-amino-acetone-3-phosphate or AAP) to form pyridoxine 5'-phosphate (PNP) and inorganic phosphate. This chain is Pyridoxine 5'-phosphate synthase, found in Xylella fastidiosa (strain 9a5c).